A 424-amino-acid chain; its full sequence is L-rhamnose isomerase (424 aa).

Positions 261, 293, and 295 each coordinate Mn(2+).

The protein belongs to the rhamnose isomerase family. It depends on Mn(2+) as a cofactor.

The protein resides in the cytoplasm. The enzyme catalyses L-rhamnopyranose = L-rhamnulose. Its pathway is carbohydrate degradation; L-rhamnose degradation; glycerone phosphate from L-rhamnose: step 1/3. In terms of biological role, catalyzes the interconversion of L-rhamnose and L-rhamnulose. This is L-rhamnose isomerase from Bacillus subtilis (strain 168).